Here is a 1610-residue protein sequence, read N- to C-terminus: E3 ubiquitin-protein ligase listerin (1610 aa).

Over residues 1–10 (MKKKSTDLYG) the composition is skewed to basic and acidic residues. The segment at 1-20 (MKKKSTDLYGRKNPGMQSMS) is disordered. 12 HEAT repeats span residues 110 to 148 (LKIF…SDRA), 314 to 351 (VPML…NLIT), 372 to 408 (IGAM…EVYD), 409 to 443 (CLLN…RYFK), 590 to 626 (SPAF…SFDE), 627 to 664 (LENI…TAVF), 736 to 773 (KSLY…KALE), 965 to 1003 (GKMP…VVSN), 1119 to 1156 (CCFL…MSVV), 1322 to 1354 (RVYL…HAMD), 1355 to 1393 (LLRP…YSSA), and 1435 to 1473 (FTGY…KVNR). The segment at 1558 to 1604 (CAICYSVLSVERTLPNKRCGTCRHKFHASCLYKWFKSSNSSRCPLCR) adopts an RING-type; atypical zinc-finger fold.

The protein belongs to the LTN1 family. Component of the ribosome quality control complex (RQC), composed of the E3 ubiquitin ligase rkr1/ltn1, rqc1 and mtr1/rqc2, as well as cdc48 and its ubiquitin-binding cofactors. RQC forms a stable complex with 60S ribosomal subunits.

Its subcellular location is the nucleus. It localises to the cytoplasm. The protein localises to the cytosol. The catalysed reaction is S-ubiquitinyl-[E2 ubiquitin-conjugating enzyme]-L-cysteine + [acceptor protein]-L-lysine = [E2 ubiquitin-conjugating enzyme]-L-cysteine + N(6)-ubiquitinyl-[acceptor protein]-L-lysine.. It participates in protein modification; protein ubiquitination. Its function is as follows. E3 ubiquitin-protein ligase component of the ribosome quality control complex (RQC), a ribosome-associated complex that mediates ubiquitination and extraction of incompletely synthesized nascent chains for proteasomal degradation. Mediates ubiquitination of proteins derived from mRNAs lacking stop codons (non-stop proteins) and other translation arrest products induced by poly-lysine sequences and tandem rare codons. Ubiquitination leads to cdc48 recruitment for extraction and degradation of the incomplete translation product. May indirectly play a role in chromatin function and transcription. The chain is E3 ubiquitin-protein ligase listerin from Schizosaccharomyces pombe (strain 972 / ATCC 24843) (Fission yeast).